The sequence spans 1210 residues: ATP-dependent helicase/nuclease subunit A (1210 aa).

The UvrD-like helicase ATP-binding domain maps to 27–483 (QKRTAQQIEA…ILLKENFRSQ (457 aa)). Residue 48–55 (ASAGSGKT) participates in ATP binding. A UvrD-like helicase C-terminal domain is found at 512-798 (QLIAGSHAQT…NLMTIHKSKG (287 aa)).

It belongs to the helicase family. AddA subfamily. As to quaternary structure, heterodimer of AddA and AddB/RexB. The cofactor is Mg(2+).

The enzyme catalyses Couples ATP hydrolysis with the unwinding of duplex DNA by translocating in the 3'-5' direction.. The catalysed reaction is ATP + H2O = ADP + phosphate + H(+). The heterodimer acts as both an ATP-dependent DNA helicase and an ATP-dependent, dual-direction single-stranded exonuclease. Recognizes the chi site generating a DNA molecule suitable for the initiation of homologous recombination. The AddA nuclease domain is required for chi fragment generation; this subunit has the helicase and 3' -&gt; 5' nuclease activities. The polypeptide is ATP-dependent helicase/nuclease subunit A (Streptococcus pyogenes serotype M5 (strain Manfredo)).